Reading from the N-terminus, the 215-residue chain is uncharacterized protein (215 aa).

Residues 1-17 (MKKVLASATILSLMLVG) form the signal peptide. Residues 17–110 (GCSNGGNDES…NKQQQSVQDN (94 aa)) form a disordered region. The N-palmitoyl cysteine moiety is linked to residue Cys18. Cys18 is lipidated: S-diacylglycerol cysteine. The segment covering 25–69 (ESSHKDDSSKTEQKDKSSSQHDSKKDSKRNDTNNKQDNQENKSNK) has biased composition (basic and acidic residues). Positions 70–95 (EQTSNQNSNAGEQRTSERPTTNSNGI) are enriched in polar residues. A compositionally biased stretch (low complexity) spans 96–110 (SSDNQNKQQQSVQDN).

The protein resides in the cell membrane. This is an uncharacterized protein from Staphylococcus epidermidis (strain ATCC 12228 / FDA PCI 1200).